The primary structure comprises 1153 residues: Cytosolic carboxypeptidase 1 (1153 aa).

Residues 357-400 (NQPPGVDDVVDESDENEATEVDTENDTENEEDDTGHKTQNDDIE) form a disordered region. Residues 364-389 (DVVDESDENEATEVDTENDTENEEDD) show a composition bias toward acidic residues. Positions 774-1063 (YPYTYSMLKM…QFCLALLRLR (290 aa)) constitute a Peptidase M14 domain. His845, Glu848, and His942 together coordinate Zn(2+). Glu1027 (proton donor/acceptor) is an active-site residue. Positions 1108–1128 (AFLEEVDYSAESNDENDPELE) are enriched in acidic residues. The disordered stretch occupies residues 1108 to 1153 (AFLEEVDYSAESNDENDPELEPDLRDNHALPDPSSDSELSHQDSLT). Over residues 1141–1153 (SSDSELSHQDSLT) the composition is skewed to polar residues.

The protein belongs to the peptidase M14 family. The cofactor is Zn(2+).

It localises to the cytoplasm. The protein localises to the cytosol. It is found in the nucleus. The protein resides in the mitochondrion. The enzyme catalyses (L-glutamyl)(n+1)-gamma-L-glutamyl-L-glutamyl-[protein] + H2O = (L-glutamyl)(n)-gamma-L-glutamyl-L-glutamyl-[protein] + L-glutamate. It carries out the reaction C-terminal L-alpha-aminoacyl-L-glutamyl-L-glutamyl-[tubulin] + H2O = C-terminal L-alpha-aminoacyl-L-glutamyl-[tubulin] + L-glutamate. Its function is as follows. Metallocarboxypeptidase that mediates protein deglutamylation of tubulin and non-tubulin target proteins. Catalyzes the removal of polyglutamate side chains present on the gamma-carboxyl group of glutamate residues within the C-terminal tail of alpha- and beta-tubulin. Specifically cleaves tubulin long-side-chains, while it is not able to remove the branching point glutamate. Also catalyzes the removal of polyglutamate residues from the carboxy-terminus of alpha-tubulin as well as non-tubulin proteins. In Danio rerio (Zebrafish), this protein is Cytosolic carboxypeptidase 1 (agtpbp1).